We begin with the raw amino-acid sequence, 183 residues long: ESX-1 secretion-associated protein EspH (183 aa).

The segment covering 1–16 (MVDPPGNDDDHGDLDA) has biased composition (acidic residues). The segment at 1–32 (MVDPPGNDDDHGDLDALDFSAAHTNEASPLDA) is disordered.

The sequence is that of ESX-1 secretion-associated protein EspH from Mycobacterium tuberculosis (strain ATCC 25618 / H37Rv).